We begin with the raw amino-acid sequence, 130 residues long: Small ribosomal subunit protein uS8 (130 aa).

The protein belongs to the universal ribosomal protein uS8 family. As to quaternary structure, part of the 30S ribosomal subunit. Contacts proteins S5 and S12.

One of the primary rRNA binding proteins, it binds directly to 16S rRNA central domain where it helps coordinate assembly of the platform of the 30S subunit. The protein is Small ribosomal subunit protein uS8 of Phytoplasma australiense.